Reading from the N-terminus, the 83-residue chain is Cytochrome c-554(548) (83 aa).

The heme c site is built by C14, C17, H18, and M63.

In terms of assembly, homodimer. In terms of processing, binds 1 heme c group covalently per subunit.

The sequence is that of Cytochrome c-554(548) from Halomonas halodenitrificans (strain ATCC 12084 / NCIMB 8669) (Paracoccus halodenitrificans).